We begin with the raw amino-acid sequence, 1033 residues long: TBC domain-containing protein kinase-like protein (1033 aa).

Disordered stretches follow at residues 1-21, 35-55, and 81-101; these read MMKS…YKFK, YDNN…NTVT, and GSIG…TPKP. Composition is skewed to low complexity over residues 36–52 and 81–97; these read DNNN…DDNN and GSIG…NSVS. Residues 72–425 form the Protein kinase domain; the sequence is NKLTINQNNG…SETLLDHPYF (354 aa). ATP is bound by residues 78–86 and K113; that span reads QNNGSIGGS. The segment covering 535 to 546 has biased composition (polar residues); that stretch reads STNSGLNSPQPY. The tract at residues 535–560 is disordered; it reads STNSGLNSPQPYQHQHHQHQHQHQHP. A compositionally biased stretch (basic residues) spans 548 to 558; sequence HQHHQHQHQHQ. A Rab-GAP TBC domain is found at 657-844; the sequence is FVPPILRGDI…ILWDSILLCP (188 aa).

Belongs to the protein kinase superfamily. Ser/Thr protein kinase family.

In Dictyostelium discoideum (Social amoeba), this protein is TBC domain-containing protein kinase-like protein (tbck).